The chain runs to 555 residues: Potassium-transporting ATPase potassium-binding subunit (555 aa).

Helical transmembrane passes span 2–22, 60–80, 130–150, 173–193, 246–266, 278–298, 374–394, 412–432, 483–503, and 525–545; these read IWVA…PTGI, QYAL…YFIF, IGIT…VMAF, VFLP…VPQT, MSNI…PFTY, ILFV…TTSE, AGFV…GLMV, LIAV…ALAL, LVMF…AASL, and GIFI…MLVL.

The protein belongs to the KdpA family. In terms of assembly, the system is composed of three essential subunits: KdpA, KdpB and KdpC.

It localises to the cell membrane. Part of the high-affinity ATP-driven potassium transport (or Kdp) system, which catalyzes the hydrolysis of ATP coupled with the electrogenic transport of potassium into the cytoplasm. This subunit binds the extracellular potassium ions and delivers the ions to the membrane domain of KdpB through an intramembrane tunnel. The polypeptide is Potassium-transporting ATPase potassium-binding subunit (Bacillus cereus (strain G9842)).